The chain runs to 505 residues: Probable bifunctional methylthioribulose-1-phosphate dehydratase/enolase-phosphatase E1 (505 aa).

The methylthioribulose-1-phosphate dehydratase stretch occupies residues 1 to 237 (MGLDKDGISN…ALKLHQLGLD (237 aa)). Cysteine 109 is a binding site for substrate. Zn(2+) contacts are provided by histidine 127 and histidine 129. The active-site Proton donor/acceptor; for methylthioribulose-1-phosphate dehydratase activity is glutamate 152. Histidine 202 contributes to the Zn(2+) binding site. Positions 266 to 505 (FVLDIEGTTT…FRTAKSLLEL (240 aa)) are enolase-phosphatase E1. Residues aspartate 269 and glutamate 271 each coordinate Mg(2+). Residues 404–405 (SS) and lysine 438 each bind substrate. Position 464 (aspartate 464) interacts with Mg(2+).

The protein in the N-terminal section; belongs to the aldolase class II family. MtnB subfamily. It in the C-terminal section; belongs to the HAD-like hydrolase superfamily. MasA/MtnC family. Requires Zn(2+) as cofactor. Mg(2+) is required as a cofactor.

The enzyme catalyses 5-(methylsulfanyl)-D-ribulose 1-phosphate = 5-methylsulfanyl-2,3-dioxopentyl phosphate + H2O. It carries out the reaction 5-methylsulfanyl-2,3-dioxopentyl phosphate + H2O = 1,2-dihydroxy-5-(methylsulfanyl)pent-1-en-3-one + phosphate. It functions in the pathway amino-acid biosynthesis; L-methionine biosynthesis via salvage pathway; L-methionine from S-methyl-5-thio-alpha-D-ribose 1-phosphate: step 2/6. It participates in amino-acid biosynthesis; L-methionine biosynthesis via salvage pathway; L-methionine from S-methyl-5-thio-alpha-D-ribose 1-phosphate: step 3/6. The protein operates within amino-acid biosynthesis; L-methionine biosynthesis via salvage pathway; L-methionine from S-methyl-5-thio-alpha-D-ribose 1-phosphate: step 4/6. This chain is Probable bifunctional methylthioribulose-1-phosphate dehydratase/enolase-phosphatase E1, found in Physcomitrium patens (Spreading-leaved earth moss).